A 162-amino-acid polypeptide reads, in one-letter code: Endoribonuclease YbeY (162 aa).

Zn(2+)-binding residues include histidine 117, histidine 121, and histidine 127.

Belongs to the endoribonuclease YbeY family. It depends on Zn(2+) as a cofactor.

The protein localises to the cytoplasm. Its function is as follows. Single strand-specific metallo-endoribonuclease involved in late-stage 70S ribosome quality control and in maturation of the 3' terminus of the 16S rRNA. In Francisella tularensis subsp. mediasiatica (strain FSC147), this protein is Endoribonuclease YbeY.